Consider the following 999-residue polypeptide: Hypoxia up-regulated protein 1 (999 aa).

An N-terminal signal peptide occupies residues 1 to 32 (MADKVRRQRPRRRVCWALVAVLLADLLALSDT). N-linked (GlcNAc...) asparagine glycans are attached at residues asparagine 155, asparagine 222, and asparagine 515. Phosphoserine is present on serine 567. Residues 578–694 (GNTISSLFGG…KKQKPARKRR (117 aa)) are disordered. An N-linked (GlcNAc...) asparagine glycan is attached at asparagine 596. 2 stretches are compositionally biased toward basic and acidic residues: residues 611 to 626 (GSKD…KEEA) and 641 to 672 (PKGD…KAEA). N-linked (GlcNAc...) asparagine glycans are attached at residues asparagine 830, asparagine 862, and asparagine 869. Residue lysine 883 is modified to N6-acetyllysine. Residues 909–999 (AKFTKPRPRP…QKRPLKNDEL (91 aa)) form a disordered region. N-linked (GlcNAc...) asparagine glycans are attached at residues asparagine 922 and asparagine 931. The short motif at 996–999 (NDEL) is the Prevents secretion from ER element.

The protein belongs to the heat shock protein 70 family. As to quaternary structure, part of a large chaperone multiprotein complex comprising DNAJB11, HSP90B1, HSPA5, HYOU, PDIA2, PDIA4, PDIA6, PPIB, SDF2L1, UGGT1 and very small amounts of ERP29, but not, or at very low levels, CALR nor CANX. In terms of tissue distribution, highly expressed in tissues that contain well-developed endoplasmic reticulum and synthesize large amounts of secretory proteins. Highly expressed in liver and pancreas and lower expression in brain and kidney. Also expressed in macrophages within aortic atherosclerotic plaques, and in breast cancers.

The protein localises to the endoplasmic reticulum lumen. Has a pivotal role in cytoprotective cellular mechanisms triggered by oxygen deprivation. Promotes HSPA5/BiP-mediated ATP nucleotide exchange and thereby activates the unfolded protein response (UPR) pathway in the presence of endoplasmic reticulum stress. May play a role as a molecular chaperone and participate in protein folding. The polypeptide is Hypoxia up-regulated protein 1 (HYOU1) (Homo sapiens (Human)).